The following is a 195-amino-acid chain: Cytochrome c oxidase subunit 1 (195 aa).

The helical transmembrane segment at 12-32 (MYWVLGFIFLFTLGGLTGIVL) threads the bilayer. Residues histidine 42 and aspartate 43 each contribute to the Mg(2+) site. Histidine 50 contacts heme a3. A Fe(II)-heme a-binding site is contributed by histidine 52. 3 helical membrane passes run 59 to 79 (AVFA…GLVL), 88 to 108 (FIVM…LGLA), and 131 to 151 (GSLM…EAFL).

This sequence belongs to the heme-copper respiratory oxidase family. In terms of assembly, component of the cytochrome c oxidase (complex IV, CIV), a multisubunit enzyme composed of a catalytic core of 3 subunits and several supernumerary subunits. The complex exists as a monomer or a dimer and forms supercomplexes (SCs) in the inner mitochondrial membrane with ubiquinol-cytochrome c oxidoreductase (cytochrome b-c1 complex, complex III, CIII). The cofactor is heme. Requires Cu cation as cofactor.

Its subcellular location is the mitochondrion inner membrane. The catalysed reaction is 4 Fe(II)-[cytochrome c] + O2 + 8 H(+)(in) = 4 Fe(III)-[cytochrome c] + 2 H2O + 4 H(+)(out). The protein operates within energy metabolism; oxidative phosphorylation. In terms of biological role, component of the cytochrome c oxidase, the last enzyme in the mitochondrial electron transport chain which drives oxidative phosphorylation. The respiratory chain contains 3 multisubunit complexes succinate dehydrogenase (complex II, CII), ubiquinol-cytochrome c oxidoreductase (cytochrome b-c1 complex, complex III, CIII) and cytochrome c oxidase (complex IV, CIV), that cooperate to transfer electrons derived from NADH and succinate to molecular oxygen, creating an electrochemical gradient over the inner membrane that drives transmembrane transport and the ATP synthase. Cytochrome c oxidase is the component of the respiratory chain that catalyzes the reduction of oxygen to water. Electrons originating from reduced cytochrome c in the intermembrane space (IMS) are transferred via the dinuclear copper A center (CU(A)) of subunit 2 and heme A of subunit 1 to the active site in subunit 1, a binuclear center (BNC) formed by heme A3 and copper B (CU(B)). The BNC reduces molecular oxygen to 2 water molecules using 4 electrons from cytochrome c in the IMS and 4 protons from the mitochondrial matrix. In Albinaria turrita (Door snail), this protein is Cytochrome c oxidase subunit 1 (COI).